A 454-amino-acid chain; its full sequence is Light-independent protochlorophyllide reductase subunit N (454 aa).

[4Fe-4S] cluster is bound by residues C22, C47, and C107.

It belongs to the BchN/ChlN family. Protochlorophyllide reductase is composed of three subunits; ChlL, ChlN and ChlB. Forms a heterotetramer of two ChlB and two ChlN subunits. The cofactor is [4Fe-4S] cluster.

The protein resides in the plastid. The protein localises to the chloroplast. It catalyses the reaction chlorophyllide a + oxidized 2[4Fe-4S]-[ferredoxin] + 2 ADP + 2 phosphate = protochlorophyllide a + reduced 2[4Fe-4S]-[ferredoxin] + 2 ATP + 2 H2O. Its pathway is porphyrin-containing compound metabolism; chlorophyll biosynthesis (light-independent). Component of the dark-operative protochlorophyllide reductase (DPOR) that uses Mg-ATP and reduced ferredoxin to reduce ring D of protochlorophyllide (Pchlide) to form chlorophyllide a (Chlide). This reaction is light-independent. The NB-protein (ChlN-ChlB) is the catalytic component of the complex. The sequence is that of Light-independent protochlorophyllide reductase subunit N from Cycas taitungensis (Prince sago).